Consider the following 347-residue polypeptide: Cytoplasmic tRNA 2-thiolation protein 1 (347 aa).

Serine 200 carries the phosphoserine modification. Residues 315–347 form a disordered region; sequence LAIGKGRRGLDEEGPPREPQPSRPLTSEPVPDF.

Belongs to the TtcA family. CTU1/NCS6/ATPBD3 subfamily. Component of a complex at least composed of URM1, CTU2/NCS2 and CTU1/ATPBD3. May form a heterodimer with CTU2/NCS2.

The protein resides in the cytoplasm. The protein operates within tRNA modification; 5-methoxycarbonylmethyl-2-thiouridine-tRNA biosynthesis. Its function is as follows. Plays a central role in 2-thiolation of mcm(5)S(2)U at tRNA wobble positions of tRNA(Lys), tRNA(Glu) and tRNA(Gln). Directly binds tRNAs and probably acts by catalyzing adenylation of tRNAs, an intermediate required for 2-thiolation. It is unclear whether it acts as a sulfurtransferase that transfers sulfur from thiocarboxylated URM1 onto the uridine of tRNAs at wobble position. The polypeptide is Cytoplasmic tRNA 2-thiolation protein 1 (Bos taurus (Bovine)).